A 477-amino-acid polypeptide reads, in one-letter code: Proton extrusion protein PxcA (477 aa).

The next 3 membrane-spanning stretches (helical) occupy residues 239–259 (FILL…ITFV), 354–374 (GIKN…IIST), and 437–457 (FNFL…KYWI).

The protein belongs to the CemA family.

It is found in the cell inner membrane. Functionally, required for H(+) efflux immediately after light irradiation to form a rapid H(+) concentration gradient across the thylakoid membranes. Together with PxcL, contributes to transient H(+) uptake following dark to light transition. This Trichodesmium erythraeum (strain IMS101) protein is Proton extrusion protein PxcA.